The sequence spans 211 residues: MTEQQSPPEQMVTGEGAGERGGNYKITIYELENFQGRRCELSEELPNVVDKALEKVGSIQVESGPWLGFERQAFAGEQFVLEKGDYPRWDSWSNSHNSDSLMSLRPLQIDSPDHKIHLFENAGYTGRKMEIVDDDVPSLWAHGFQDRVASVRALNGTWVGYEYPGYRGRQHVFEKGEYRHWNEWDANQPLMQSVRRVRDQQWHQRGSFENS.

The interval 1 to 21 is disordered; it reads MTEQQSPPEQMVTGEGAGERG. The segment at 1-23 is N-terminal arm; the sequence is MTEQQSPPEQMVTGEGAGERGGN. 2 Beta/gamma crystallin 'Greek key' domains span residues 24 to 63 and 64 to 108; these read YKIT…QVES and GPWL…RPLQ. The connecting peptide stretch occupies residues 109-113; sequence IDSPD. 2 Beta/gamma crystallin 'Greek key' domains span residues 114–155 and 156–198; these read HKIH…RALN and GTWV…RRVR. A C-terminal arm region spans residues 200 to 211; it reads QQWHQRGSFENS.

Belongs to the beta/gamma-crystallin family. As to quaternary structure, homo/heterodimer, or complexes of higher-order. The structure of beta-crystallin oligomers seems to be stabilized through interactions between the N-terminal arms.

Functionally, crystallins are the dominant structural components of the vertebrate eye lens. This is Beta-crystallin B3 (CRYBB3) from Gallus gallus (Chicken).